Consider the following 2715-residue polypeptide: Histone-lysine N-methyltransferase 2B (2715 aa).

Gly residues predominate over residues 1-11 (MAAAAGGGSCP). Disordered regions lie at residues 1-65 (MAAA…GEDT), 81-302 (RRLW…GGLP), 320-518 (SLGL…PKST), and 532-771 (VSAR…QMPP). Ala-2 carries the post-translational modification N-acetylalanine. The segment covering 12–24 (GPGSARGRFPGRP) has biased composition (low complexity). The short motif at 17–36 (RGRFPGRPRGAGGGGGRGGR) is the Menin-binding motif (MBM) element. 2 stretches are compositionally biased toward gly residues: residues 25–38 (RGAGGGGGRGGRGN) and 49–60 (RGGGATGPGGAE). Positions 37–44 (GNGAERVR) form a DNA-binding region, a.T hook 1. Residues 109 to 123 (PEEESSDGESDEEEF) show a composition bias toward acidic residues. Residues 110–117 (EEESSDGE) constitute a DNA-binding region (a.T hook 2). A phosphoserine mark is found at Ser-113, Ser-114, and Ser-118. The segment covering 144–158 (QRGRAPRGRGRKHKT) has biased composition (basic residues). Over residues 160–176 (PLPPPRLADVAPTPPKT) the composition is skewed to pro residues. Positions 199–208 (RAQAPQAPRS) are enriched in low complexity. Ser-351 is modified (phosphoserine). Positions 357 to 365 (QEQKLDDEE) form a DNA-binding region, a.T hook 3. Positions 361 to 374 (LDDEEEEKKEEEEK) are enriched in acidic residues. Residues 375-387 (DKEGEEKEERAVA) show a composition bias toward basic and acidic residues. The span at 401 to 449 (LPPPPLTPPAPSPPPPLPPPSTSPPPPLCPPPPPPVSPPPLPSPPPPPA) shows a compositional bias: pro residues. Basic and acidic residues predominate over residues 545–556 (RFMDEDPPKPPK). Residues 568 to 596 (TTSPPVPQEPAPVPSPPRAPTPPSTPVPL) are compositionally biased toward pro residues. The span at 597–608 (PEKRRSILREPT) shows a compositional bias: basic and acidic residues. The segment covering 618–637 (LPPPPPAPPPPPAPSPPPAP) has biased composition (pro residues). A compositionally biased stretch (low complexity) spans 731-751 (PQTQAQLLQPLQALQTQLLPQ). Pro residues predominate over residues 752-769 (ALPPPQPQLQPPPSPQQM). Lys-805 is covalently cross-linked (Glycyl lysine isopeptide (Lys-Gly) (interchain with G-Cter in SUMO2)). Disordered stretches follow at residues 819 to 868 (PLSP…GPRI) and 894 to 959 (SALP…HHGK). Residues Ser-821, Ser-844, and Ser-861 each carry the phosphoserine modification. The segment covering 836–857 (ISDRGPVRSEDESVEAKRERPS) has biased composition (basic and acidic residues). A compositionally biased stretch (low complexity) spans 907–917 (EDTSSASETES). The residue at position 936 (Ser-936) is a Phosphoserine. The segment covering 948–959 (TPRRSLPSHHGK) has biased composition (basic residues). The CXXC-type zinc-finger motif lies at 959–1006 (KKMRMARCGHCRGCLRVQDCGSCVNCLDKPKFGGPNTKKQCCVYRKCD). Zn(2+)-binding residues include Cys-966, Cys-969, Cys-972, Cys-978, Cys-981, Cys-984, Cys-1000, and Cys-1005. Residues 1027-1132 (LLPWDSDESP…RPRKPTLQPV (106 aa)) form a disordered region. Ser-1032, Ser-1035, Ser-1092, and Ser-1095 each carry phosphoserine. A Glycyl lysine isopeptide (Lys-Gly) (interchain with G-Cter in SUMO2) cross-link involves residue Lys-1136. The disordered stretch occupies residues 1146–1166 (LAPGPFASFPNGWTGKQKSPD). PHD-type zinc fingers lie at residues 1201–1252 (PMVC…CKFC), 1249–1303 (CKFC…CVRC), and 1335–1396 (GNYC…CAGA). The Bromo domain occupies 1404 to 1504 (ALSGALQGGL…GLLLKLLESA (101 aa)). Positions 1545–1567 (QQEPETPESGQPPGDPSAAFQGK) are disordered. The C2HC pre-PHD-type zinc-finger motif lies at 1578-1618 (PRQCALCLKYGDADSKEAGRLLYIGQNEWTHVNCAIWSAEV). The PHD-type 4 zinc-finger motif lies at 1639-1686 (MRCELCLKPGATVGCCLSSCLSNFHFMCARASYCIFQDDKKVFCQKHT). Positions 1727-1783 (AINVLIGSIRIDSLGTLSDLSDCEGRLFPIGYQCSRLYWSTVDARRRCWYRCRILEY) constitute an FYR N-terminal domain. Disordered stretches follow at residues 1806–1978 (HSPA…PDFE), 2008–2093 (VAAG…VVRA), 2118–2162 (LKNL…PTRT), and 2280–2412 (RVST…RTGP). Over residues 1876–1894 (PLGGVSFGPLPSPGSPSSL) the composition is skewed to low complexity. Ser-1930 and Ser-1936 each carry phosphoserine. Pro residues predominate over residues 1960 to 1972 (PPGPAPSPPPPED). Positions 2062–2072 (DGVDDGTDSEA) are enriched in acidic residues. Residues Thr-2068 and Thr-2083 each carry the phosphothreonine modification. Residues 2144 to 2153 (NGSQPSQGLT) show a composition bias toward polar residues. Residues Ser-2288 and Ser-2348 each carry the phosphoserine modification. Positions 2342–2351 (EPAGEESPGP) are enriched in low complexity. Residues 2359–2373 (LPLPEDGPPQVPDGP) show a composition bias toward pro residues. One can recognise an FYR C-terminal domain in the interval 2411–2492 (GPHLRFEISS…QRCQHYKFRY (82 aa)). The short motif at 2508 to 2513 (GAARAE) is the WDR5 interaction motif (WIN) element. One can recognise an SET domain in the interval 2575–2691 (EAVGVYRSAI…RGEELTYDYK (117 aa)). S-adenosyl-L-methionine is bound by residues His-2585, Arg-2587, Tyr-2629, and 2652 to 2653 (NH). Zn(2+) contacts are provided by Cys-2655 and Cys-2703. A Post-SET domain is found at 2699–2715 (NKLPCNCGAKRCRRFLN). An S-adenosyl-L-methionine-binding site is contributed by Asn-2704. The Zn(2+) site is built by Cys-2705 and Cys-2710.

The protein belongs to the class V-like SAM-binding methyltransferase superfamily. Histone-lysine methyltransferase family. TRX/MLL subfamily. As to quaternary structure, component of the menin-associated histone methyltransferase complex, at least composed of KMT2B/MLL4, ASH2L, RBBP5, WDR5, DPY30, MEN1; the complex interacts with POLR2A and POLR2B via MEN1. Interacts with NFE2. Interacts with KDM6B. Interacts (via WIN motif) with WDR5. Interacts (via MBM motif) with MEN1. Forms a core complex with the evolutionary conserved subcomplex WRAD composed of WDR5, RBBP5, ASH2L/ASH2 and DPY30 subunits; WRAD differentially stimulates the methyltransferase activity. Widely expressed. Highest levels in testis. Also found in brain with higher expression in the cerebellum than in any other region, bone marrow, heart, muscle, kidney, placenta, spleen, thymus, prostate, ovary, intestine, colon, peripheral blood lymphocytes and pancreas. Often amplified in pancreatic carcinomas.

It localises to the nucleus. The enzyme catalyses L-lysyl(4)-[histone H3] + S-adenosyl-L-methionine = N(6)-methyl-L-lysyl(4)-[histone H3] + S-adenosyl-L-homocysteine + H(+). It carries out the reaction N(6)-methyl-L-lysyl(4)-[histone H3] + S-adenosyl-L-methionine = N(6),N(6)-dimethyl-L-lysyl(4)-[histone H3] + S-adenosyl-L-homocysteine + H(+). Functionally, histone methyltransferase that catalyzes methyl group transfer from S-adenosyl-L-methionine to the epsilon-amino group of 'Lys-4' of histone H3 (H3K4) via a non-processive mechanism. Part of chromatin remodeling machinery predominantly forms H3K4me1 and H3K4me2 methylation marks at active chromatin sites where transcription and DNA repair take place. Likely plays a redundant role with KMT2C in enriching H3K4me1 marks on primed and active enhancer elements. Plays a central role in beta-globin locus transcription regulation by being recruited by NFE2. Plays an important role in controlling bulk H3K4me during oocyte growth and preimplantation development. Required during the transcriptionally active period of oocyte growth for the establishment and/or maintenance of bulk H3K4 trimethylation (H3K4me3), global transcriptional silencing that preceeds resumption of meiosis, oocyte survival and normal zygotic genome activation. The chain is Histone-lysine N-methyltransferase 2B (KMT2B) from Homo sapiens (Human).